Consider the following 253-residue polypeptide: Probable transcriptional regulatory protein Tpet_0454 (253 aa).

It belongs to the TACO1 family.

Its subcellular location is the cytoplasm. The sequence is that of Probable transcriptional regulatory protein Tpet_0454 from Thermotoga petrophila (strain ATCC BAA-488 / DSM 13995 / JCM 10881 / RKU-1).